The chain runs to 208 residues: Ciliary-associated calcium-binding coiled-coil protein 1 (208 aa).

Testis-specific. Expressed in spermatocytes and round spermatids (at protein level).

It localises to the cytoplasm. It is found in the cytoskeleton. The protein localises to the microtubule organizing center. The protein resides in the centrosome. Its subcellular location is the cell projection. It localises to the cilium. It is found in the flagellum. Its function is as follows. Calcium-binding protein. May be involved in the control of sperm flagellar movement. This Mus musculus (Mouse) protein is Ciliary-associated calcium-binding coiled-coil protein 1.